Reading from the N-terminus, the 74-residue chain is Conotoxin Vi15a (74 aa).

Residues 1–19 (MMPVILLLLLSLAIRCADG) form the signal peptide. Residues 20–43 (KAVQGDSDPSASLLTGDKNHDLPV) constitute a propeptide that is removed on maturation. A Tryptophan amide modification is found at Trp72.

In terms of processing, contains four disulfide bonds. In terms of tissue distribution, expressed by the venom duct.

Its subcellular location is the secreted. The sequence is that of Conotoxin Vi15a from Conus virgo (Virgin cone).